We begin with the raw amino-acid sequence, 550 residues long: MLKNINPTQTQAWKALTAHFESAQDMDMKELFAQDAKRFESFSTRFGSDILVDYSKNLIDAETMQHLFALANETEVKSAIEAMFGGDAINKTEGRSVLHTALRNRSDKPVMVDGKDVMPAVNAVLAKMELFTHRIVSGEWKGYTGKEITDVVNIGIGGSDLGPYMVTEALTPYKTRLNMHFVSNVDGTHIVETLKPLNPETTLFLVASKTFTTQETMTNAHSARDWFLAEAGDSAHVAKHFAALSTNAASVAEFGIDTDNMFEFWDWVGGRYSLWSAIGLSISLSIGFDNFAELLDGAHEMDNHFASTEFESNIPVILALIGVWYNNFHGAESEAILPYDQYMHRFAAYFQQGNMESNGKFVDREGNPVEYQTGPIIWGEPGTNGQHAFYQLIHQGTKLIPSDFIAPAISHNPASDHHQKLMSNFFAQTEALAFGKTKETVEAEFLAAGKTAEEVAELVPFKVFEGNRPTNSILVKQINPRSLGNLIAMYEHKIFVQGVIWNIFSFDQWGVELGKQLANQILPELADDAQVTSHDSSTNGLINAFKALKA.

Glu356 serves as the catalytic Proton donor. Catalysis depends on residues His387 and Lys515.

The protein belongs to the GPI family.

It is found in the cytoplasm. It catalyses the reaction alpha-D-glucose 6-phosphate = beta-D-fructose 6-phosphate. It functions in the pathway carbohydrate biosynthesis; gluconeogenesis. The protein operates within carbohydrate degradation; glycolysis; D-glyceraldehyde 3-phosphate and glycerone phosphate from D-glucose: step 2/4. Its function is as follows. Catalyzes the reversible isomerization of glucose-6-phosphate to fructose-6-phosphate. This chain is Glucose-6-phosphate isomerase, found in Vibrio atlanticus (strain LGP32) (Vibrio splendidus (strain Mel32)).